Here is a 511-residue protein sequence, read N- to C-terminus: Potassium voltage-gated channel subfamily A member 10 (511 aa).

The disordered stretch occupies residues 25–44 (EPGYATDFDPTSSKGRPGSS). A helical transmembrane segment spans residues 218-238 (VAVVSVLVVVISITIFCLETL). A helical transmembrane segment spans residues 271–292 (FFMVESTCIVWFTFELVLRFVV). Residue Cys293 is the site of S-palmitoyl cysteine attachment. The helical transmembrane segment at 303–323 (IMNIIDIISIIPYFATLITEL) threads the bilayer. A helical; Voltage-sensor membrane pass occupies residues 339-358 (ILRIIRLVRVFRIFKLSRHS). The chain crosses the membrane as a helical span at residues 375–395 (LGLLIFFLFIGVILFSSAVYF). Positions 421-426 (TVGYGD) match the Selectivity filter motif. Residues 436–456 (IVGTLCAIAGVLTIALPVPVI) form a helical membrane-spanning segment. The interval 489–511 (SRMGSTESLNKTNGSCSAEKSRK) is disordered.

The protein belongs to the potassium channel family. A (Shaker) (TC 1.A.1.2) subfamily. Kv1.8/KCNA10 sub-subfamily. As to quaternary structure, homotetramer. Interacts with KCN4B/POMP. Interaction with KCN4B/POMP is necessary for the modulation of channel activity by cAMP. Expressed strongly in the inner ear and weakly in skeletal muscle. Not detected in other tissues.

Its subcellular location is the membrane. The enzyme catalyses K(+)(in) = K(+)(out). The channel activity is up-regulated by cAMP. In terms of biological role, voltage-gated potassium ion channel that mediates K(+) permeability of excitable membranes. When opened in response to the voltage difference across the membrane, KCNA10 channel selectively allows the flow of potassium ions across the membrane down their electrochemical gradient. This is Potassium voltage-gated channel subfamily A member 10 from Mus musculus (Mouse).